Reading from the N-terminus, the 208-residue chain is Uracil phosphoribosyltransferase (208 aa).

5-phospho-alpha-D-ribose 1-diphosphate is bound by residues Arg-78, Arg-103, and 130–138; that span reads DPMLATGGS. Uracil contacts are provided by residues Ile-193 and 198-200; that span reads GDA. Asp-199 is a 5-phospho-alpha-D-ribose 1-diphosphate binding site.

The protein belongs to the UPRTase family. It depends on Mg(2+) as a cofactor.

The enzyme catalyses UMP + diphosphate = 5-phospho-alpha-D-ribose 1-diphosphate + uracil. Its pathway is pyrimidine metabolism; UMP biosynthesis via salvage pathway; UMP from uracil: step 1/1. Allosterically activated by GTP. Functionally, catalyzes the conversion of uracil and 5-phospho-alpha-D-ribose 1-diphosphate (PRPP) to UMP and diphosphate. In Klebsiella pneumoniae subsp. pneumoniae (strain ATCC 700721 / MGH 78578), this protein is Uracil phosphoribosyltransferase.